The chain runs to 48 residues: MTNKNTSKDMHKNAPKGHNPGQPEPLSGSKKVKNRNHTRQKHNTSHDM.

Over residues 1-12 the composition is skewed to basic and acidic residues; it reads MTNKNTSKDMHK. The segment at 1–48 is disordered; sequence MTNKNTSKDMHKNAPKGHNPGQPEPLSGSKKVKNRNHTRQKHNTSHDM. Basic residues predominate over residues 30–48; sequence KKVKNRNHTRQKHNTSHDM.

Belongs to the SspP family.

It is found in the spore core. The protein is Small, acid-soluble spore protein P of Bacillus velezensis (strain DSM 23117 / BGSC 10A6 / LMG 26770 / FZB42) (Bacillus amyloliquefaciens subsp. plantarum).